A 432-amino-acid chain; its full sequence is Sonic hedgehog protein (432 aa).

Positions 1–26 are cleaved as a signal peptide; the sequence is MDEMILLRRVLLAGFICALLVPSGLS. C27 carries the N-palmitoyl cysteine lipid modification. The short motif at 35 to 41 is the Cardin-Weintraub element; it reads TRKRFKK. Residues E92, E93, D98, T128, E129, D132, and D134 each coordinate Ca(2+). 3 residues coordinate Zn(2+): H143, D150, and H185. G200 carries the Cholesterol glycine ester lipid modification.

This sequence belongs to the hedgehog family. Interacts with HHATL/GUP1 which negatively regulates HHAT-mediated palmitoylation of the SHH N-terminus. Interacts with BOC and CDON. Interacts with HHIP. Interacts with DISP1 via its cholesterol anchor. Interacts with SCUBE2. As to quaternary structure, multimer. Post-translationally, the C-terminal domain displays an autoproteolysis activity and a cholesterol transferase activity. Both activities result in the cleavage of the full-length protein and covalent attachment of a cholesterol moiety to the C-terminal of the newly generated N-terminal fragment (ShhN). Cholesterylation is required for the sonic hedgehog protein N-product targeting to lipid rafts and multimerization. ShhN is the active species in both local and long-range signaling, whereas the C-product (ShhC) is degraded in the reticulum endoplasmic. In terms of processing, N-palmitoylation by HHAT of ShhN is required for sonic hedgehog protein N-product multimerization and full activity. It is a prerequisite for the membrane-proximal positioning and the subsequent shedding of this N-terminal peptide. The lipidated N- and C-terminal peptides of ShhNp can be cleaved (shedding). The N-terminal palmitoylated peptide is cleaved at the Cardin-Weintraub (CW) motif site. The cleavage reduced the interactions with heparan sulfate. The cleavage is enhanced by SCUBE2.

The protein resides in the endoplasmic reticulum membrane. The protein localises to the golgi apparatus membrane. It is found in the cell membrane. It catalyses the reaction glycyl-L-cysteinyl-[protein] + cholesterol + H(+) = [protein]-C-terminal glycyl cholesterol ester + N-terminal L-cysteinyl-[protein]. The C-terminal part of the sonic hedgehog protein precursor displays an autoproteolysis and a cholesterol transferase activity. Both activities result in the cleavage of the full-length protein into two parts (ShhN and ShhC) followed by the covalent attachment of a cholesterol moiety to the C-terminal of the newly generated ShhN. Both activities occur in the endoplasmic reticulum. Once cleaved, ShhC is degraded in the endoplasmic reticulum. In terms of biological role, the dually lipidated sonic hedgehog protein N-product (ShhNp) is a morphogen which is essential for a variety of patterning events during development. Induces ventral cell fate in the neural tube and somites. Involved in the patterning of the anterior-posterior axis of the developing limb bud. Essential for axon guidance. Binds to the patched (PTCH1) receptor, which functions in association with smoothened (SMO), to activate the transcription of target genes. In the absence of SHH, PTCH1 represses the constitutive signaling activity of SMO. The sequence is that of Sonic hedgehog protein from Cynops pyrrhogaster (Japanese fire-bellied newt).